We begin with the raw amino-acid sequence, 648 residues long: MRTSSESHSRSDAFNGKNDASQVTVDSDSASKDHHDHDHHHKDTSINERQSQHVHQQAGVSKVEAFNKALYQSGPSGRLLLYVLVASLALTMFAYALDQGITYQFNAIASSDFSQHASLGAVNTASSIIRAISKPFLGKLSDITSRPTTYVVVLVVYAVGFAVAASSQGLAAYIVGASFTAFGKSGLDLLSDIIVGDLTPLEWRAFWSGMLATPFLITTFINGFISDAFVPNNWRWGLGMFAIMMPVLLTPAIWTLYGMQLKAAKMGMVSMGDSGLARKDGVKVQGMQQYLPMARSIAVEMDLIGLLLLGLAFSLILLALNLAPASNGGWSNPSMIAMLVIGFVILGLFIAYEALLAPVPITPKRILTNKAFLCALTVDVFNQMASATRNNYWSSYIYIIKPWSNYVWTIFIGTTTLTLCTMSPIGGLIHRATHRYKTLMVIGAIIKLIGYGVGLDGNSRSTLSTARLAVSQVMLGMGAWTVIGARVGSQASVPHQDLSVVISVMSLWSTMASSIGSTIAATIWQDRMLNYMREECPPSTPEATLKKIYGSIKTLKTKYDWEDPVRMGAIRAYTRTNGIILAVSLVLAAVPVVFSCLMPNYYLGKQQNAVTNTDVLGERTEVPRRVEEPTNGKPSLWQRVKRGYYKET.

Basic and acidic residues-rich tracts occupy residues 1-11 and 29-46; these read MRTSSESHSRS and SASK…DTSI. The segment at 1 to 58 is disordered; the sequence is MRTSSESHSRSDAFNGKNDASQVTVDSDSASKDHHDHDHHHKDTSINERQSQHVHQQA. Positions 47–58 are enriched in polar residues; the sequence is NERQSQHVHQQA. 11 consecutive transmembrane segments (helical) span residues 79 to 99, 151 to 171, 205 to 225, 236 to 256, 303 to 323, 336 to 356, 409 to 429, 438 to 458, 468 to 488, 500 to 520, and 578 to 598; these read LLLY…ALDQ, VVVL…QGLA, AFWS…NGFI, WGLG…IWTL, LIGL…LNLA, IAML…EALL, TIFI…GGLI, TLMV…LDGN, LAVS…ARVG, VVIS…STIA, and GIIL…SCLM.

It belongs to the major facilitator superfamily.

It is found in the cell membrane. In terms of biological role, siderophore transporter; part of the gene cluster 14 that mediates the biosynthesis of a ferrichrome A-like siderophors which may contribute to organismal virulence. The polypeptide is Siderophore transporter MYCGRDRAFT_70577 (Zymoseptoria tritici (strain CBS 115943 / IPO323) (Speckled leaf blotch fungus)).